The following is a 282-amino-acid chain: Nucleotide-binding protein XAC2976 (282 aa).

Gly-5–Ser-12 contacts ATP. Position 57-60 (Asp-57–Ser-60) interacts with GTP.

It belongs to the RapZ-like family.

Functionally, displays ATPase and GTPase activities. The polypeptide is Nucleotide-binding protein XAC2976 (Xanthomonas axonopodis pv. citri (strain 306)).